A 294-amino-acid polypeptide reads, in one-letter code: MASFRRFRLLSPLKPCVTFGRMLYTRIDKDGLTMLAGHLAYVSLLSLVPLITVIFALFAAFPMFAEISIKLKAFIFANFMPATGDIIQNYLEQFVANSNRMTVVGTCGLIVTALLLIYSVDSVLNIIWRSKIQRSLVFSFAVYWMVLTLGPILVGASMVISSYLLSLHWLAHARVDSMIDEILRVFPLLISWVSFWLLYSVVPTVRVPARDALIGALVAALLFELGKKGFAMYITLFPSYQLIYGVLAVIPILFLWVYWSWCIVLLGAEITVTLGEYRAERHHAKSVITQSPEM.

7 consecutive transmembrane segments (helical) span residues 44 to 64 (LLSL…FPMF), 67 to 87 (ISIK…GDII), 108 to 128 (GLIV…NIIW), 136 to 156 (LVFS…LVGA), 185 to 205 (VFPL…VPTV), 212 to 232 (ALIG…GFAM), and 246 to 266 (VLAV…IVLL).

This sequence belongs to the UPF0761 family.

Its subcellular location is the cell inner membrane. The sequence is that of UPF0761 membrane protein YPTB0027 from Yersinia pseudotuberculosis serotype I (strain IP32953).